The primary structure comprises 714 residues: Fatty acid oxidation complex subunit alpha (714 aa).

The interval 1–190 is enoyl-CoA hydratase; it reads MEMASAFTLN…KLGLVDDVVP (190 aa). The interval 306-714 is 3-hydroxyacyl-CoA dehydrogenase; sequence APLNSVGILG…FWKTTATDLQ (409 aa).

In the N-terminal section; belongs to the enoyl-CoA hydratase/isomerase family. The protein in the central section; belongs to the 3-hydroxyacyl-CoA dehydrogenase family. As to quaternary structure, heterotetramer of two alpha chains (FadJ) and two beta chains (FadI).

It is found in the cytoplasm. It catalyses the reaction a (3S)-3-hydroxyacyl-CoA = a (2E)-enoyl-CoA + H2O. It carries out the reaction a 4-saturated-(3S)-3-hydroxyacyl-CoA = a (3E)-enoyl-CoA + H2O. The enzyme catalyses a (3S)-3-hydroxyacyl-CoA + NAD(+) = a 3-oxoacyl-CoA + NADH + H(+). The catalysed reaction is (3S)-3-hydroxybutanoyl-CoA = (3R)-3-hydroxybutanoyl-CoA. It functions in the pathway lipid metabolism; fatty acid beta-oxidation. Catalyzes the formation of a hydroxyacyl-CoA by addition of water on enoyl-CoA. Also exhibits 3-hydroxyacyl-CoA epimerase and 3-hydroxyacyl-CoA dehydrogenase activities. This is Fatty acid oxidation complex subunit alpha from Escherichia coli (strain ATCC 8739 / DSM 1576 / NBRC 3972 / NCIMB 8545 / WDCM 00012 / Crooks).